We begin with the raw amino-acid sequence, 641 residues long: Probable serine protease FE772_23065 (641 aa).

The helical transmembrane segment at 532–552 (WVELIAILAAAGWIRVMLIGL) threads the bilayer.

Belongs to the peptidase S1 family.

It localises to the cell inner membrane. Its function is as follows. Possibly a dedicated protease for substrate gasdermin bGSDM; cleaves the bGSDM precursor, releasing the pore-forming moiety, which integrates into the membrane and triggers cell death. Involved in defense against bacteriophages. When this probable 4 gene operon (bGSDM-FE772_23060-FE772_23065-FE772_23070) is inserted into E.coli it provides nearly 100-fold protection against phages T5 and T6 and about 8-fold against phage T4. The operon without bGSDM no longer protects against phage. The protein is Probable serine protease FE772_23065 of Lysobacter enzymogenes.